A 459-amino-acid chain; its full sequence is Zinc finger and BTB domain-containing protein 9 (459 aa).

The region spanning 48-112 is the BTB domain; sequence CDVSLLVQGR…IYSGSLHLPL (65 aa). Residues 178–189 show a composition bias toward polar residues; that stretch reads VRSSASTENSVL. Disordered stretches follow at residues 178–200 and 212–274; these read VRSSASTENSVLPESPAGGEGSE and EEEE…ASQI. Glycyl lysine isopeptide (Lys-Gly) (interchain with G-Cter in SUMO2) cross-links involve residues K285, K293, and K368. The segment at 293 to 356 is disordered; the sequence is KEKTKVLSGE…GGTGQAMHGP (64 aa). The C2H2-type 1 zinc finger occupies 397–419; sequence FGCGICNKRFKLKHHLTEHMKTH. The C2H2-type 2; atypical zinc-finger motif lies at 424–446; sequence HACPHCGRRFRVQAFFLRHRDLC.

The protein resides in the nucleus. May be involved in transcriptional regulation. The protein is Zinc finger and BTB domain-containing protein 9 (Zbtb9) of Mus musculus (Mouse).